Consider the following 217-residue polypeptide: Adenylate kinase (217 aa).

Residue 10–15 (GAGKGT) coordinates ATP. The tract at residues 30 to 59 (STGDMFRAAMKEETDLGLEAKSYIDKGELV) is NMP. AMP contacts are provided by residues threonine 31, arginine 36, 57–59 (ELV), 85–88 (GFPR), and glutamine 92. An LID region spans residues 126 to 163 (GRRICKNCGATYHLVFNPPAKENVCDKCGGELYQREDD). Arginine 127 provides a ligand contact to ATP. Residues cysteine 130 and cysteine 133 each coordinate Zn(2+). 136-137 (TY) lines the ATP pocket. Residues cysteine 150 and cysteine 153 each coordinate Zn(2+). The AMP site is built by arginine 160 and arginine 171. Lysine 199 lines the ATP pocket.

It belongs to the adenylate kinase family. In terms of assembly, monomer.

The protein localises to the cytoplasm. The catalysed reaction is AMP + ATP = 2 ADP. The protein operates within purine metabolism; AMP biosynthesis via salvage pathway; AMP from ADP: step 1/1. Its function is as follows. Catalyzes the reversible transfer of the terminal phosphate group between ATP and AMP. Plays an important role in cellular energy homeostasis and in adenine nucleotide metabolism. This chain is Adenylate kinase, found in Bacillus licheniformis (strain ATCC 14580 / DSM 13 / JCM 2505 / CCUG 7422 / NBRC 12200 / NCIMB 9375 / NCTC 10341 / NRRL NRS-1264 / Gibson 46).